The sequence spans 409 residues: Elongation factor Tu (409 aa).

Residues 10–214 (KPHVNVGTIG…AVDSYIPTPE (205 aa)) form the tr-type G domain. The interval 19–26 (GHVDHGKT) is G1. 19-26 (GHVDHGKT) contacts GTP. Mg(2+) is bound at residue Thr26. Residues 60–64 (GITIN) form a G2 region. The G3 stretch occupies residues 81 to 84 (DCPG). GTP contacts are provided by residues 81 to 85 (DCPGH) and 136 to 139 (NKVD). Residues 136 to 139 (NKVD) form a G4 region. The G5 stretch occupies residues 174-176 (SAL).

The protein belongs to the TRAFAC class translation factor GTPase superfamily. Classic translation factor GTPase family. EF-Tu/EF-1A subfamily. Monomer.

It is found in the cytoplasm. It catalyses the reaction GTP + H2O = GDP + phosphate + H(+). In terms of biological role, GTP hydrolase that promotes the GTP-dependent binding of aminoacyl-tRNA to the A-site of ribosomes during protein biosynthesis. The sequence is that of Elongation factor Tu from Synechococcus sp. (strain JA-3-3Ab) (Cyanobacteria bacterium Yellowstone A-Prime).